Here is a 101-residue protein sequence, read N- to C-terminus: Transcription factor ILI2 (101 aa).

The disordered stretch occupies residues 1–22 (MSSSRRSRTSSRLAAAPPPTDE). In terms of domain architecture, bHLH spans 8 to 63 (RTSSRLAAAPPPTDEQMAELISKLQAVLPTRGGEANAKQASSAEVLQEACRYIRRL).

It belongs to the bHLH protein family.

Functionally, atypical and probable non DNA-binding bHLH transcription factor that integrates multiple signaling pathways to regulate cell elongation and plant development. The sequence is that of Transcription factor ILI2 (ILI2) from Oryza sativa subsp. indica (Rice).